The chain runs to 475 residues: Glycogen synthase (475 aa).

An ADP-alpha-D-glucose-binding site is contributed by Lys-15.

This sequence belongs to the glycosyltransferase 1 family. Bacterial/plant glycogen synthase subfamily.

The enzyme catalyses [(1-&gt;4)-alpha-D-glucosyl](n) + ADP-alpha-D-glucose = [(1-&gt;4)-alpha-D-glucosyl](n+1) + ADP + H(+). It participates in glycan biosynthesis; glycogen biosynthesis. Its function is as follows. Synthesizes alpha-1,4-glucan chains using ADP-glucose. The sequence is that of Glycogen synthase from Alkaliphilus metalliredigens (strain QYMF).